Consider the following 310-residue polypeptide: Tagatose-6-phosphate kinase (310 aa).

The protein belongs to the carbohydrate kinase PfkB family. LacC subfamily.

It carries out the reaction D-tagatofuranose 6-phosphate + ATP = D-tagatofuranose 1,6-bisphosphate + ADP + H(+). It functions in the pathway carbohydrate metabolism; D-tagatose 6-phosphate degradation; D-glyceraldehyde 3-phosphate and glycerone phosphate from D-tagatose 6-phosphate: step 1/2. The chain is Tagatose-6-phosphate kinase from Staphylococcus aureus (strain USA300 / TCH1516).